Here is a 474-residue protein sequence, read N- to C-terminus: Gamma-aminobutyric acid receptor subunit beta-2 (474 aa).

The first 25 residues, 1–25, serve as a signal peptide directing secretion; sequence MWRVRKRGYFGIWSFPLIIAAVCAQ. The Extracellular segment spans residues 26–244; it reads SVNDPSNMSL…SFKLKRNIGY (219 aa). 2 N-linked (GlcNAc...) asparagine glycosylation sites follow: Asn32 and Asn104. Tyr121 contributes to the histamine binding site. Cysteines 160 and 174 form a disulfide. Residue Asn173 is glycosylated (N-linked (GlcNAc...) asparagine). Histamine-binding positions include 180–181 and Thr226; that span reads SY. 4-aminobutanoate contacts are provided by Tyr181 and Thr226. 3 helical membrane passes run 245–266, 270–292, and 304–326; these read FILQ…SFWI, ASAA…NTHL, and AIDM…YALV. The Cytoplasmic segment spans residues 327-451; the sequence is NYIFFGRGPQ…DLTDVNAIDR (125 aa). At Tyr403 the chain carries Phosphotyrosine. A helical membrane pass occupies residues 452-473; sequence WSRIFFPVVFSFFNIVYWLYYV.

It belongs to the ligand-gated ion channel (TC 1.A.9) family. Gamma-aminobutyric acid receptor (TC 1.A.9.5) subfamily. GABRB2 sub-subfamily. In terms of assembly, heteropentamer, formed by a combination of alpha (GABRA1-6), beta (GABRB1-3), gamma (GABRG1-3), delta (GABRD), epsilon (GABRE), rho (GABRR1-3), pi (GABRP) and theta (GABRQ) chains, each subunit exhibiting distinct physiological and pharmacological properties. Interacts with UBQLN1. May interact with KIF21B. Identified in a complex of 720 kDa composed of LHFPL4, NLGN2, GABRA1, GABRB2, GABRG2 and GABRB3. Glycosylated. Expressed in brain (at protein level), in cerebellar granule cells. Expressed in lungs, in alveolar epithelium.

The protein resides in the postsynaptic cell membrane. It localises to the cell membrane. Its subcellular location is the cytoplasmic vesicle membrane. It catalyses the reaction chloride(in) = chloride(out). Its activity is regulated as follows. Allosterically activated by benzodiazepines and the anesthetic etomidate. Inhibited by the antagonist bicuculline. Potentiated by histamine. In terms of biological role, beta subunit of the heteropentameric ligand-gated chloride channel gated by gamma-aminobutyric acid (GABA), a major inhibitory neurotransmitter in the brain. GABA-gated chloride channels, also named GABA(A) receptors (GABAAR), consist of five subunits arranged around a central pore and contain GABA active binding site(s) located at the alpha and beta subunit interface(s). When activated by GABA, GABAARs selectively allow the flow of chloride anions across the cell membrane down their electrochemical gradient. Chloride influx into the postsynaptic neuron following GABAAR opening decreases the neuron ability to generate a new action potential, thereby reducing nerve transmission. GABAARs containing alpha-1 and beta-2 or -3 subunits exhibit synaptogenic activity; the gamma-2 subunit being necessary but not sufficient to induce rapid synaptic contacts formation. Extrasynaptic beta-2 receptors contribute to the tonic GABAergic inhibition. Beta-containing GABAARs can simultaneously bind GABA and histamine where histamine binds at the interface of two neighboring beta subunits, which may be involved in the regulation of sleep and wakefulness. This chain is Gamma-aminobutyric acid receptor subunit beta-2, found in Rattus norvegicus (Rat).